We begin with the raw amino-acid sequence, 74 residues long: Small ribosomal subunit protein eS17 (74 aa).

This sequence belongs to the eukaryotic ribosomal protein eS17 family.

In Ignicoccus hospitalis (strain KIN4/I / DSM 18386 / JCM 14125), this protein is Small ribosomal subunit protein eS17.